A 562-amino-acid chain; its full sequence is Phosphoglucomutase-1 (562 aa).

The residue at position 1 (methionine 1) is an N-acetylmethionine. Lysine 16 is subject to N6-acetyllysine. Residue arginine 23 coordinates alpha-D-glucose 1,6-bisphosphate. Residue threonine 115 is modified to Phosphothreonine. Residue serine 117 coordinates alpha-D-glucose 1,6-bisphosphate. Catalysis depends on serine 117, which acts as the Phosphoserine intermediate. Serine 117 provides a ligand contact to Mg(2+). 2 positions are modified to phosphoserine: serine 117 and serine 134. Threonine 185 carries the phosphothreonine modification. Serine 213 carries the phosphoserine modification. 3 residues coordinate Mg(2+): aspartate 288, aspartate 290, and aspartate 292. Residues aspartate 292 and arginine 293 each contribute to the alpha-D-glucose 1,6-bisphosphate site. Lysine 349 is modified (N6-acetyllysine). The residue at position 353 (tyrosine 353) is a Phosphotyrosine. Threonine 357 is an alpha-D-glucose 1,6-bisphosphate binding site. Serine 369 bears the Phosphoserine mark. Alpha-D-glucose 1,6-bisphosphate contacts are provided by glutamate 376, serine 378, and lysine 389. At serine 378 the chain carries Phosphoserine. Lysine 419 is subject to N6-succinyllysine. Threonine 467 is modified (phosphothreonine; by PAK1). Phosphoserine occurs at positions 477, 485, and 505. A Phosphothreonine modification is found at threonine 507. Serine 509 and serine 541 each carry phosphoserine.

It belongs to the phosphohexose mutase family. As to quaternary structure, monomer. It depends on Mg(2+) as a cofactor. Phosphorylation at Thr-467 by PAK1 significantly enhances enzymatic activity.

The protein resides in the cytoplasm. It catalyses the reaction alpha-D-glucose 1-phosphate = alpha-D-glucose 6-phosphate. The enzyme catalyses O-phospho-L-seryl-[protein] + alpha-D-glucose 1-phosphate = alpha-D-glucose 1,6-bisphosphate + L-seryl-[protein]. It carries out the reaction alpha-D-glucose 1,6-bisphosphate + L-seryl-[protein] = O-phospho-L-seryl-[protein] + alpha-D-glucose 6-phosphate. Catalyzes the reversible isomerization of alpha-D-glucose 1-phosphate to alpha-D-glucose 6-phosphate. The mechanism proceeds via the intermediate compound alpha-D-glucose 1,6-bisphosphate. This enzyme participates in both the breakdown and synthesis of glucose. In Bos taurus (Bovine), this protein is Phosphoglucomutase-1 (PGM1).